Here is a 490-residue protein sequence, read N- to C-terminus: Betaine aldehyde dehydrogenase (490 aa).

K(+) is bound by residues threonine 26, isoleucine 27, and aspartate 93. Glycine 150–tryptophan 152 is a binding site for NAD(+). Lysine 162 functions as the Charge relay system in the catalytic mechanism. Lysine 176–glutamate 179 is a binding site for NAD(+). A K(+)-binding site is contributed by valine 180. Residue glycine 230–serine 233 coordinates NAD(+). Leucine 246 contributes to the K(+) binding site. Catalysis depends on glutamate 252, which acts as the Proton acceptor. The NAD(+) site is built by glycine 254, cysteine 286, and glutamate 387. Cysteine 286 serves as the catalytic Nucleophile. Residue cysteine 286 is modified to Cysteine sulfenic acid (-SOH). Positions 457 and 460 each coordinate K(+). The active-site Charge relay system is the glutamate 464.

The protein belongs to the aldehyde dehydrogenase family. Dimer of dimers. Requires K(+) as cofactor.

The enzyme catalyses betaine aldehyde + NAD(+) + H2O = glycine betaine + NADH + 2 H(+). It functions in the pathway amine and polyamine biosynthesis; betaine biosynthesis via choline pathway; betaine from betaine aldehyde: step 1/1. Involved in the biosynthesis of the osmoprotectant glycine betaine. Catalyzes the irreversible oxidation of betaine aldehyde to the corresponding acid. The sequence is that of Betaine aldehyde dehydrogenase from Escherichia coli O157:H7.